The sequence spans 161 residues: SsrA-binding protein (161 aa).

This sequence belongs to the SmpB family.

It is found in the cytoplasm. Functionally, required for rescue of stalled ribosomes mediated by trans-translation. Binds to transfer-messenger RNA (tmRNA), required for stable association of tmRNA with ribosomes. tmRNA and SmpB together mimic tRNA shape, replacing the anticodon stem-loop with SmpB. tmRNA is encoded by the ssrA gene; the 2 termini fold to resemble tRNA(Ala) and it encodes a 'tag peptide', a short internal open reading frame. During trans-translation Ala-aminoacylated tmRNA acts like a tRNA, entering the A-site of stalled ribosomes, displacing the stalled mRNA. The ribosome then switches to translate the ORF on the tmRNA; the nascent peptide is terminated with the 'tag peptide' encoded by the tmRNA and targeted for degradation. The ribosome is freed to recommence translation, which seems to be the essential function of trans-translation. In Vibrio parahaemolyticus serotype O3:K6 (strain RIMD 2210633), this protein is SsrA-binding protein.